An 878-amino-acid polypeptide reads, in one-letter code: DNA mismatch repair protein MutS (878 aa).

Residue 629-636 (GPNMAGKS) coordinates ATP.

It belongs to the DNA mismatch repair MutS family.

This protein is involved in the repair of mismatches in DNA. It is possible that it carries out the mismatch recognition step. This protein has a weak ATPase activity. This chain is DNA mismatch repair protein MutS, found in Roseobacter denitrificans (strain ATCC 33942 / OCh 114) (Erythrobacter sp. (strain OCh 114)).